The following is a 132-amino-acid chain: Small ribosomal subunit protein uS8 (132 aa).

It belongs to the universal ribosomal protein uS8 family. Part of the 30S ribosomal subunit. Contacts proteins S5 and S12.

Functionally, one of the primary rRNA binding proteins, it binds directly to 16S rRNA central domain where it helps coordinate assembly of the platform of the 30S subunit. In Rickettsia typhi (strain ATCC VR-144 / Wilmington), this protein is Small ribosomal subunit protein uS8.